A 343-amino-acid chain; its full sequence is MDDNKRKSLDAALKSLDKTFGKGTILRLGDKEVEQIDSIGTGSVGLDLALGIGGVPKGRIIEIYGPESSGKTTLTLHIIAECQKAGGVCAFIDAEHALDVKYAKNLGVNTDDLYVSQPDFGEQALEIVETIARSGAVDLIVVDSVAALTPKAEIEGDMGDQHVGLQARLMSQALRKLTGIVHKMNTTVIFINQIRMKIGAMGYGTPETTTGGNALKFYASVRLDVRKVATLKQNEEPIGNRVKVKVVKNKVAPPFRQAEFDVMFGEGLSREGELIDYGVKLDIVDKSGAWFSYKDKKLGQGRENSKAFLKENPEIADEITKAIQNSMGIEGMISGSEDDEGEE.

An ATP-binding site is contributed by 65-72; that stretch reads GPESSGKT.

The protein belongs to the RecA family.

Its subcellular location is the cytoplasm. Its function is as follows. Can catalyze the hydrolysis of ATP in the presence of single-stranded DNA, the ATP-dependent uptake of single-stranded DNA by duplex DNA, and the ATP-dependent hybridization of homologous single-stranded DNAs. It interacts with LexA causing its activation and leading to its autocatalytic cleavage. The protein is Protein RecA of Campylobacter jejuni subsp. jejuni serotype O:6 (strain 81116 / NCTC 11828).